A 548-amino-acid polypeptide reads, in one-letter code: Chaperonin GroEL 1 (548 aa).

Residues 30-33 (TLGP), K51, 87-91 (DGTTT), G415, 479-481 (NAA), and D495 each bind ATP.

The protein belongs to the chaperonin (HSP60) family. In terms of assembly, forms a cylinder of 14 subunits composed of two heptameric rings stacked back-to-back. Interacts with the co-chaperonin GroES.

It is found in the cytoplasm. It carries out the reaction ATP + H2O + a folded polypeptide = ADP + phosphate + an unfolded polypeptide.. Together with its co-chaperonin GroES, plays an essential role in assisting protein folding. The GroEL-GroES system forms a nano-cage that allows encapsulation of the non-native substrate proteins and provides a physical environment optimized to promote and accelerate protein folding. The sequence is that of Chaperonin GroEL 1 from Vibrio harveyi (Beneckea harveyi).